Reading from the N-terminus, the 69-residue chain is DNA-directed RNA polymerase subunit omega (69 aa).

It belongs to the RNA polymerase subunit omega family. As to quaternary structure, the RNAP catalytic core consists of 2 alpha, 1 beta, 1 beta' and 1 omega subunit. When a sigma factor is associated with the core the holoenzyme is formed, which can initiate transcription.

The catalysed reaction is RNA(n) + a ribonucleoside 5'-triphosphate = RNA(n+1) + diphosphate. Its function is as follows. Promotes RNA polymerase assembly. Latches the N- and C-terminal regions of the beta' subunit thereby facilitating its interaction with the beta and alpha subunits. The polypeptide is DNA-directed RNA polymerase subunit omega (Geotalea daltonii (strain DSM 22248 / JCM 15807 / FRC-32) (Geobacter daltonii)).